Here is a 257-residue protein sequence, read N- to C-terminus: 1-(5-phosphoribosyl)-5-[(5-phosphoribosylamino)methylideneamino] imidazole-4-carboxamide isomerase (257 aa).

Residue aspartate 8 is the Proton acceptor of the active site. Aspartate 129 serves as the catalytic Proton donor.

This sequence belongs to the HisA/HisF family.

It localises to the cytoplasm. The enzyme catalyses 1-(5-phospho-beta-D-ribosyl)-5-[(5-phospho-beta-D-ribosylamino)methylideneamino]imidazole-4-carboxamide = 5-[(5-phospho-1-deoxy-D-ribulos-1-ylimino)methylamino]-1-(5-phospho-beta-D-ribosyl)imidazole-4-carboxamide. It participates in amino-acid biosynthesis; L-histidine biosynthesis; L-histidine from 5-phospho-alpha-D-ribose 1-diphosphate: step 4/9. This is 1-(5-phosphoribosyl)-5-[(5-phosphoribosylamino)methylideneamino] imidazole-4-carboxamide isomerase from Gloeothece citriformis (strain PCC 7424) (Cyanothece sp. (strain PCC 7424)).